The following is an 867-amino-acid chain: Valine--tRNA ligase (867 aa).

Residues 42-52 (PNITGKIHMGH) carry the 'HIGH' region motif. A 'KMSKS' region motif is present at residues 521–525 (KMSKS). Residue Lys524 participates in ATP binding. Positions 794 to 867 (LGTLIDVKSE…QIISDLEAKA (74 aa)) form a coiled coil.

This sequence belongs to the class-I aminoacyl-tRNA synthetase family. ValS type 1 subfamily. As to quaternary structure, monomer.

The protein resides in the cytoplasm. The enzyme catalyses tRNA(Val) + L-valine + ATP = L-valyl-tRNA(Val) + AMP + diphosphate. Functionally, catalyzes the attachment of valine to tRNA(Val). As ValRS can inadvertently accommodate and process structurally similar amino acids such as threonine, to avoid such errors, it has a 'posttransfer' editing activity that hydrolyzes mischarged Thr-tRNA(Val) in a tRNA-dependent manner. This is Valine--tRNA ligase from Fervidobacterium nodosum (strain ATCC 35602 / DSM 5306 / Rt17-B1).